The chain runs to 298 residues: Ribosomal RNA small subunit methyltransferase A (298 aa).

The S-adenosyl-L-methionine site is built by N35, L37, G62, E83, D108, and N133.

It belongs to the class I-like SAM-binding methyltransferase superfamily. rRNA adenine N(6)-methyltransferase family. RsmA subfamily.

It is found in the cytoplasm. The catalysed reaction is adenosine(1518)/adenosine(1519) in 16S rRNA + 4 S-adenosyl-L-methionine = N(6)-dimethyladenosine(1518)/N(6)-dimethyladenosine(1519) in 16S rRNA + 4 S-adenosyl-L-homocysteine + 4 H(+). In terms of biological role, specifically dimethylates two adjacent adenosines (A1518 and A1519) in the loop of a conserved hairpin near the 3'-end of 16S rRNA in the 30S particle. May play a critical role in biogenesis of 30S subunits. The chain is Ribosomal RNA small subunit methyltransferase A from Streptococcus pyogenes serotype M12 (strain MGAS9429).